The sequence spans 363 residues: Phosphoserine aminotransferase (363 aa).

Position 42 (Arg42) interacts with L-glutamate. Residues 76–77 (GR), Trp102, Thr156, Asp175, and Gln198 contribute to the pyridoxal 5'-phosphate site. Lys199 is modified (N6-(pyridoxal phosphate)lysine). Position 240 to 241 (240 to 241 (NT)) interacts with pyridoxal 5'-phosphate.

This sequence belongs to the class-V pyridoxal-phosphate-dependent aminotransferase family. SerC subfamily. In terms of assembly, homodimer. Pyridoxal 5'-phosphate is required as a cofactor.

The protein localises to the cytoplasm. The catalysed reaction is O-phospho-L-serine + 2-oxoglutarate = 3-phosphooxypyruvate + L-glutamate. The enzyme catalyses 4-(phosphooxy)-L-threonine + 2-oxoglutarate = (R)-3-hydroxy-2-oxo-4-phosphooxybutanoate + L-glutamate. The protein operates within amino-acid biosynthesis; L-serine biosynthesis; L-serine from 3-phospho-D-glycerate: step 2/3. Its pathway is cofactor biosynthesis; pyridoxine 5'-phosphate biosynthesis; pyridoxine 5'-phosphate from D-erythrose 4-phosphate: step 3/5. In terms of biological role, catalyzes the reversible conversion of 3-phosphohydroxypyruvate to phosphoserine and of 3-hydroxy-2-oxo-4-phosphonooxybutanoate to phosphohydroxythreonine. This chain is Phosphoserine aminotransferase, found in Shewanella frigidimarina (strain NCIMB 400).